Consider the following 529-residue polypeptide: Lanosterol 14-alpha demethylase (529 aa).

Cysteine 468 contributes to the heme binding site.

This sequence belongs to the cytochrome P450 family. Heme is required as a cofactor.

It localises to the membrane. The enzyme catalyses a 14alpha-methyl steroid + 3 reduced [NADPH--hemoprotein reductase] + 3 O2 = a Delta(14) steroid + formate + 3 oxidized [NADPH--hemoprotein reductase] + 4 H2O + 4 H(+). The catalysed reaction is a 14alpha-methyl steroid + reduced [NADPH--hemoprotein reductase] + O2 = a 14alpha-hydroxymethyl steroid + oxidized [NADPH--hemoprotein reductase] + H2O + H(+). It catalyses the reaction a 14alpha-hydroxymethyl steroid + reduced [NADPH--hemoprotein reductase] + O2 = a 14alpha-formyl steroid + oxidized [NADPH--hemoprotein reductase] + 2 H2O + H(+). It carries out the reaction a 14alpha-formyl steroid + reduced [NADPH--hemoprotein reductase] + O2 = a Delta(14) steroid + formate + oxidized [NADPH--hemoprotein reductase] + H2O + 2 H(+). The enzyme catalyses lanosterol + 3 reduced [NADPH--hemoprotein reductase] + 3 O2 = 4,4-dimethyl-5alpha-cholesta-8,14,24-trien-3beta-ol + formate + 3 oxidized [NADPH--hemoprotein reductase] + 4 H2O + 4 H(+). The catalysed reaction is lanosterol + reduced [NADPH--hemoprotein reductase] + O2 = 32-hydroxylanosterol + oxidized [NADPH--hemoprotein reductase] + H2O + H(+). It catalyses the reaction 32-hydroxylanosterol + reduced [NADPH--hemoprotein reductase] + O2 = 32-oxolanosterol + oxidized [NADPH--hemoprotein reductase] + 2 H2O + H(+). It carries out the reaction 32-oxolanosterol + reduced [NADPH--hemoprotein reductase] + O2 = 4,4-dimethyl-5alpha-cholesta-8,14,24-trien-3beta-ol + formate + oxidized [NADPH--hemoprotein reductase] + H2O + 2 H(+). The enzyme catalyses eburicol + 3 reduced [NADPH--hemoprotein reductase] + 3 O2 = 14-demethyleburicol + formate + 3 oxidized [NADPH--hemoprotein reductase] + 4 H2O + 4 H(+). The catalysed reaction is eburicol + reduced [NADPH--hemoprotein reductase] + O2 = 32-hydroxyeburicol + oxidized [NADPH--hemoprotein reductase] + H2O + H(+). It catalyses the reaction 32-hydroxyeburicol + reduced [NADPH--hemoprotein reductase] + O2 = 32-oxoeburicol + oxidized [NADPH--hemoprotein reductase] + 2 H2O + H(+). It carries out the reaction 32-oxoeburicol + reduced [NADPH--hemoprotein reductase] + O2 = 14-demethyleburicol + formate + oxidized [NADPH--hemoprotein reductase] + H2O + 2 H(+). The protein operates within steroid biosynthesis; zymosterol biosynthesis; zymosterol from lanosterol: step 1/6. Functionally, sterol 14alpha-demethylase that plays a critical role in the third module of ergosterol biosynthesis pathway, being ergosterol the major sterol component in fungal membranes that participates in a variety of functions. The third module or late pathway involves the ergosterol synthesis itself through consecutive reactions that mainly occur in the endoplasmic reticulum (ER) membrane. In filamentous fungi, during the initial step of this module, lanosterol (lanosta-8,24-dien-3beta-ol) can be metabolized to eburicol. Sterol 14alpha-demethylase catalyzes the three-step oxidative removal of the 14alpha-methyl group (C-32) of both these sterols in the form of formate, and converts eburicol and lanosterol to 14-demethyleburicol (4,4,24-trimethylergosta-8,14,24(28)-trienol) and 4,4-dimethyl-5alpha-cholesta-8,14,24-trien-3beta-ol, respectively, which are further metabolized by other enzymes in the pathway to ergosterol. Can also use substrates not intrinsic to fungi, such as 24,25-dihydrolanosterol (DHL), producing 4,4-dimethyl-8,14-cholestadien-3-beta-ol, but at lower rates than the endogenous substrates. This chain is Lanosterol 14-alpha demethylase (ERG11), found in Eremothecium gossypii (strain ATCC 10895 / CBS 109.51 / FGSC 9923 / NRRL Y-1056) (Yeast).